The primary structure comprises 83 residues: Cytochrome b559 subunit alpha (83 aa).

Residues 21-35 traverse the membrane as a helical segment; it reads VIHSITIPSLFVAGW. His23 is a heme binding site.

This sequence belongs to the PsbE/PsbF family. As to quaternary structure, heterodimer of an alpha subunit and a beta subunit. PSII is composed of 1 copy each of membrane proteins PsbA, PsbB, PsbC, PsbD, PsbE, PsbF, PsbH, PsbI, PsbJ, PsbK, PsbL, PsbM, PsbT, PsbX, PsbY, PsbZ, Psb30/Ycf12, at least 3 peripheral proteins of the oxygen-evolving complex and a large number of cofactors. It forms dimeric complexes. Heme b serves as cofactor.

It is found in the plastid. The protein localises to the chloroplast thylakoid membrane. Functionally, this b-type cytochrome is tightly associated with the reaction center of photosystem II (PSII). PSII is a light-driven water:plastoquinone oxidoreductase that uses light energy to abstract electrons from H(2)O, generating O(2) and a proton gradient subsequently used for ATP formation. It consists of a core antenna complex that captures photons, and an electron transfer chain that converts photonic excitation into a charge separation. This chain is Cytochrome b559 subunit alpha, found in Nephroselmis olivacea (Green alga).